A 181-amino-acid chain; its full sequence is Shikimate kinase (181 aa).

Residue 11 to 16 (GAGKSK) coordinates ATP. Ser15 provides a ligand contact to Mg(2+). 3 residues coordinate substrate: Asp33, Arg58, and Gly80. An ATP-binding site is contributed by Arg128. Arg144 is a binding site for substrate.

Belongs to the shikimate kinase family. As to quaternary structure, monomer. The cofactor is Mg(2+).

Its subcellular location is the cytoplasm. It catalyses the reaction shikimate + ATP = 3-phosphoshikimate + ADP + H(+). It functions in the pathway metabolic intermediate biosynthesis; chorismate biosynthesis; chorismate from D-erythrose 4-phosphate and phosphoenolpyruvate: step 5/7. In terms of biological role, catalyzes the specific phosphorylation of the 3-hydroxyl group of shikimic acid using ATP as a cosubstrate. This Leptospira biflexa serovar Patoc (strain Patoc 1 / Ames) protein is Shikimate kinase.